Consider the following 503-residue polypeptide: Zinc metalloproteinase nas-14 (503 aa).

A signal peptide spans 1–25; it reads MRLLYSLFHCSAFLVGFTLSVGVLP. One can recognise a Peptidase M12A domain in the interval 116–312; that stretch reads NLVTYPDKLW…KKVNKLYQCG (197 aa). Disulfide bonds link cysteine 158–cysteine 311 and cysteine 182–cysteine 202. An N-linked (GlcNAc...) asparagine glycan is attached at asparagine 192. Residue histidine 210 participates in Zn(2+) binding. The active site involves glutamate 211. Zn(2+) is bound by residues histidine 214 and histidine 220. Low complexity predominate over residues 317–340; that stretch reads TSSTTTTTTTTTTTTTTEEPTTTT. Residues 317–377 are disordered; it reads TSSTTTTTTT…TPKPVERSRN (61 aa). The span at 342-351 shows a compositional bias: basic and acidic residues; sequence VEEKPKDKKV. A compositionally biased stretch (low complexity) spans 352–370; it reads SSTTTTTKKPTTTTTTTPK. 3 disulfide bridges follow: cysteine 380-cysteine 414, cysteine 387-cysteine 407, and cysteine 396-cysteine 411. The 35-residue stretch at 380-414 folds into the ShKT 1 domain; it reads CEDLNAHCGMWEQLGHCQHSVKYMAHYCRKACNLC. The segment at 422 to 464 is disordered; it reads TTTTPKPVPRNKEKENKSASSTTRGTSTATSTTPKTTTTTTSA. The N-linked (GlcNAc...) asparagine glycan is linked to asparagine 437. Residues 439 to 464 are compositionally biased toward low complexity; it reads SASSTTRGTSTATSTTPKTTTTTTSA. 3 disulfides stabilise this stretch: cysteine 469/cysteine 503, cysteine 476/cysteine 496, and cysteine 485/cysteine 500. The ShKT 2 domain occupies 469-503; the sequence is CEDKNLFCSYWAKIGECNSESKFMKIFCKASCGKC.

It depends on Zn(2+) as a cofactor. Expressed in pharyngeal muscles and mc cells.

The protein localises to the secreted. In terms of biological role, metalloprotease. The protein is Zinc metalloproteinase nas-14 (nas-14) of Caenorhabditis elegans.